Here is a 329-residue protein sequence, read N- to C-terminus: T-lymphocyte activation antigen CD86 (329 aa).

Positions 1–23 (MDPQCTMGLSNILFVMAFLLSGA) are cleaved as a signal peptide. Over 24-247 (APLKIQAYFN…DPQPPPDHIP (224 aa)) the chain is Extracellular. Asparagine 33, asparagine 47, asparagine 135, asparagine 146, asparagine 154, asparagine 177, asparagine 192, and asparagine 213 each carry an N-linked (GlcNAc...) asparagine glycan. Positions 33-131 (NETADLPCQF…RIHQMNSELS (99 aa)) constitute an Ig-like V-type domain. The cysteines at positions 40 and 110 are disulfide-linked. An Ig-like C2-type domain is found at 150-225 (NVYINLTCSS…IFCILETDKT (76 aa)). A disulfide bridge links cysteine 157 with cysteine 218. A helical transmembrane segment spans residues 248–268 (WITAVLPTVIICVMVFCLILW). Over 269-329 (KWKKKKRPRN…SSCDKSDTCF (61 aa)) the chain is Cytoplasmic. The segment at 277–329 (RNSYKCGTNTMEREESEQTKKREKIHIPERSDEAQRVFKSSKTSSCDKSDTCF) is disordered. Residues 287–312 (MEREESEQTKKREKIHIPERSDEAQR) are compositionally biased toward basic and acidic residues.

In terms of assembly, homodimer. Interacts with MARCH8. Interacts (via cytoplasmic domain) with PHB1 and PHB2; the interactions increases after priming with CD40. Interacts with CD28. (Microbial infection) Interacts with adenovirus subgroup b fiber protein. As to quaternary structure, (Microbial infection) Interacts with Orthopoxvirus OPG038/M2 protein, inhibiting the interaction with CTLA4 and CD28. Post-translationally, polyubiquitinated; which is promoted by MARCH8 and results in endocytosis and lysosomal degradation. Expressed by activated B-lymphocytes and monocytes.

It localises to the cell membrane. Functionally, receptor involved in the costimulatory signal essential for T-lymphocyte proliferation and interleukin-2 production, by binding CD28 or CTLA-4. May play a critical role in the early events of T-cell activation and costimulation of naive T-cells, such as deciding between immunity and anergy that is made by T-cells within 24 hours after activation. Also involved in the regulation of B cells function, plays a role in regulating the level of IgG(1) produced. Upon CD40 engagement, activates NF-kappa-B signaling pathway via phospholipase C and protein kinase C activation. Its function is as follows. Interferes with the formation of CD86 clusters, and thus acts as a negative regulator of T-cell activation. In terms of biological role, (Microbial infection) Acts as a receptor for adenovirus subgroup B. In Homo sapiens (Human), this protein is T-lymphocyte activation antigen CD86 (CD86).